The primary structure comprises 335 residues: Large ribosomal subunit protein uL3 (335 aa).

The tract at residues 1–20 (MATIHRPRRGSLAFSPRKRA) is disordered.

It belongs to the universal ribosomal protein uL3 family. Part of the 50S ribosomal subunit. Forms a cluster with proteins L14 and L24e.

One of the primary rRNA binding proteins, it binds directly near the 3'-end of the 23S rRNA, where it nucleates assembly of the 50S subunit. This Methanothrix thermoacetophila (strain DSM 6194 / JCM 14653 / NBRC 101360 / PT) (Methanosaeta thermophila) protein is Large ribosomal subunit protein uL3.